The primary structure comprises 356 residues: 1-deoxy-D-xylulose 5-phosphate reductoisomerase (356 aa).

NADPH is bound by residues T7, G8, S9, I10, G31, N33, and N111. 1-deoxy-D-xylulose 5-phosphate is bound at residue K112. E113 is an NADPH binding site. D131 is a binding site for Mn(2+). Positions 132, 133, 155, and 178 each coordinate 1-deoxy-D-xylulose 5-phosphate. E133 contacts Mn(2+). G184 serves as a coordination point for NADPH. 1-deoxy-D-xylulose 5-phosphate contacts are provided by S191, N196, K197, and E200. E200 provides a ligand contact to Mn(2+).

This sequence belongs to the DXR family. Mg(2+) serves as cofactor. It depends on Mn(2+) as a cofactor.

It carries out the reaction 2-C-methyl-D-erythritol 4-phosphate + NADP(+) = 1-deoxy-D-xylulose 5-phosphate + NADPH + H(+). It functions in the pathway isoprenoid biosynthesis; isopentenyl diphosphate biosynthesis via DXP pathway; isopentenyl diphosphate from 1-deoxy-D-xylulose 5-phosphate: step 1/6. In terms of biological role, catalyzes the NADPH-dependent rearrangement and reduction of 1-deoxy-D-xylulose-5-phosphate (DXP) to 2-C-methyl-D-erythritol 4-phosphate (MEP). This chain is 1-deoxy-D-xylulose 5-phosphate reductoisomerase, found in Campylobacter jejuni subsp. doylei (strain ATCC BAA-1458 / RM4099 / 269.97).